We begin with the raw amino-acid sequence, 444 residues long: Exodeoxyribonuclease 7 large subunit (444 aa).

The protein belongs to the XseA family. In terms of assembly, heterooligomer composed of large and small subunits.

It is found in the cytoplasm. The enzyme catalyses Exonucleolytic cleavage in either 5'- to 3'- or 3'- to 5'-direction to yield nucleoside 5'-phosphates.. Functionally, bidirectionally degrades single-stranded DNA into large acid-insoluble oligonucleotides, which are then degraded further into small acid-soluble oligonucleotides. The protein is Exodeoxyribonuclease 7 large subunit of Rickettsia conorii (strain ATCC VR-613 / Malish 7).